The following is a 347-amino-acid chain: Phosphoribosylformylglycinamidine cyclo-ligase (347 aa).

Belongs to the AIR synthase family.

The protein localises to the cytoplasm. It catalyses the reaction 2-formamido-N(1)-(5-O-phospho-beta-D-ribosyl)acetamidine + ATP = 5-amino-1-(5-phospho-beta-D-ribosyl)imidazole + ADP + phosphate + H(+). It participates in purine metabolism; IMP biosynthesis via de novo pathway; 5-amino-1-(5-phospho-D-ribosyl)imidazole from N(2)-formyl-N(1)-(5-phospho-D-ribosyl)glycinamide: step 2/2. The protein is Phosphoribosylformylglycinamidine cyclo-ligase of Prochlorococcus marinus subsp. pastoris (strain CCMP1986 / NIES-2087 / MED4).